Consider the following 88-residue polypeptide: Cell division topological specificity factor (88 aa).

It belongs to the MinE family.

Prevents the cell division inhibition by proteins MinC and MinD at internal division sites while permitting inhibition at polar sites. This ensures cell division at the proper site by restricting the formation of a division septum at the midpoint of the long axis of the cell. This is Cell division topological specificity factor from Pseudoalteromonas translucida (strain TAC 125).